The primary structure comprises 215 residues: LysM and putative peptidoglycan-binding domain-containing protein 2 (215 aa).

The segment at 1–40 (MADSSPALSLREGGPRAPRPSAPSPPPRSRSGSESEEAEL) is disordered. Residue A2 is modified to N-acetylalanine. S5, S24, S33, and S57 each carry phosphoserine. A compositionally biased stretch (pro residues) spans 17 to 28 (APRPSAPSPPPR). The LysM domain maps to 71 to 115 (VEHRVRAGDTLQGIALKYGVTMEQIKRANKLFTNDCIFLKKTLNI). 2 disordered regions span residues 132–175 (DSPE…EEVS) and 193–215 (AAKK…LYHS). A compositionally biased stretch (basic and acidic residues) spans 196-205 (KLKEESRDEE).

In Homo sapiens (Human), this protein is LysM and putative peptidoglycan-binding domain-containing protein 2 (LYSMD2).